Reading from the N-terminus, the 318-residue chain is DNA repair nuclease/redox regulator APEX1 (318 aa).

The interval 1-33 (MPKRGKKGAVAEDGDELKTEPEAKKSKTAAKKN) is necessary for interaction with YBX1, binding to RNA, association together with NPM1 to rRNA, endoribonuclease activity on abasic RNA and localization in the nucleoli. Residues 1 to 60 (MPKRGKKGAVAEDGDELKTEPEAKKSKTAAKKNDKEAAGEGPALYEDPPDQKTSPSGKPA) are disordered. Lys-6 and Lys-7 each carry N6-acetyllysine; by EP300. Residues 8–13 (GAVAED) carry the Nuclear localization signal (NLS) motif. Positions 16–38 (ELKTEPEAKKSKTAAKKNDKEAA) are enriched in basic and acidic residues. The segment at 23 to 33 (AKKSKTAAKKN) is necessary for interaction with NPM1 and for efficient rRNA binding. N6-acetyllysine occurs at positions 27, 31, 32, and 35. Position 54 is a phosphoserine (Ser-54). A Nuclear export signal (NES) motif is present at residues 64–80 (ICSWNVDGLRAWIKKKG). The residue at position 65 (Cys-65) is an S-nitrosocysteine; alternate. Cys-65 and Cys-93 are joined by a disulfide. Position 70 (Asp-70) interacts with Mg(2+). At Cys-93 the chain carries S-nitrosocysteine; alternate. Residue Glu-96 participates in Mg(2+) binding. Tyr-171 is a catalytic residue. Lys-197 bears the N6-acetyllysine mark. Residues Asp-210 and Asn-212 each coordinate Mg(2+). Asp-210 serves as the catalytic Proton donor/acceptor. The residue at position 233 (Thr-233) is a Phosphothreonine; by CDK5. Residues 289-318 (HSLLPALCDSKIRSKALGSDHCPITLYLAL) are mitochondrial targeting sequence (MTS). Asp-308 is a Mg(2+) binding site. Position 310 is an S-nitrosocysteine (Cys-310).

It belongs to the DNA repair enzymes AP/ExoA family. In terms of assembly, monomer. Homodimer; disulfide-linked. Component of the SET complex, composed of at least APEX1, SET, ANP32A, HMGB2, NME1 and TREX1. Associates with the dimer XRCC5/XRCC6 in a DNA-dependent manner. Interacts with SIRT1; the interaction is increased in the context of genotoxic stress. Interacts with HDAC1, HDAC2 and HDAC3; the interactions are not dependent on the APEX1 acetylation status. Interacts with XRCC1; the interaction is induced by SIRT1 and increased with the APEX1 acetylated form. Interacts with NPM1 (via N-terminal domain); the interaction is RNA-dependent and decreases in hydrogen peroxide-damaged cells. Interacts (via N-terminus) with YBX1 (via C-terminus); the interaction is increased in presence of APEX1 acetylated at Lys-6 and Lys-7. Interacts with HNRNPL; the interaction is DNA-dependent. Interacts (via N-terminus) with KPNA1 and KPNA2. Interacts with TXN; the interaction stimulates the FOS/JUN AP-1 complex DNA-binding activity in a redox-dependent manner. Interacts with GZMA, KRT8, MDM2, POLB, PRDX6, PRPF19, RPLP0, TOMM20 and WDR77. Binds to CDK5. It depends on Mg(2+) as a cofactor. Mn(2+) serves as cofactor. Phosphorylated. Phosphorylation by kinase PKC or casein kinase CK2 results in enhanced redox activity that stimulates binding of the FOS/JUN AP-1 complex to its cognate binding site. AP-endodeoxyribonuclease activity is not affected by CK2-mediated phosphorylation. Phosphorylation of Thr-233 by CDK5 in response to MPP(+)/MPTP (1-methyl-4-phenylpyridinium) reduces AP-endodeoxyribonuclease activity resulting in accumulation of DNA damage and contributing to neuronal death. In terms of processing, acetylated on Lys-6 and Lys-7. Acetylation is increased by the transcriptional coactivator EP300 acetyltransferase, genotoxic agents like H(2)O(2) and methyl methanesulfonate (MMS). Acetylation increases its binding affinity to the negative calcium response element (nCaRE) DNA promoter. The acetylated form induces a stronger binding of YBX1 to the Y-box sequence in the MDR1 promoter than the unacetylated form. Deacetylated on lysines. Lys-6 and Lys-7 are deacetylated by SIRT1. Post-translationally, cleaved at Lys-31 by granzyme A to create the mitochondrial form; leading in reduction of binding to DNA, AP endodeoxyribonuclease activity, redox activation of transcription factors and to enhanced cell death. Cleaved by granzyme K; leading to intracellular ROS accumulation and enhanced cell death after oxidative stress. Cys-69 and Cys-93 are nitrosylated in response to nitric oxide (NO) and lead to the exposure of the nuclear export signal (NES). In terms of processing, ubiquitinated by MDM2; leading to translocation to the cytoplasm and proteasomal degradation.

It localises to the nucleus. The protein localises to the nucleolus. It is found in the nucleus speckle. Its subcellular location is the endoplasmic reticulum. The protein resides in the cytoplasm. It localises to the mitochondrion. The enzyme catalyses Exonucleolytic cleavage in the 3'- to 5'-direction to yield nucleoside 5'-phosphates.. NPM1 stimulates endodeoxyribonuclease activity on double-stranded DNA with AP sites, but inhibits endoribonuclease activity on single-stranded RNA containing AP sites. Multifunctional protein that plays a central role in the cellular response to oxidative stress. The two major activities of APEX1 are DNA repair and redox regulation of transcriptional factors. Functions as an apurinic/apyrimidinic (AP) endodeoxyribonuclease in the DNA base excision repair (BER) pathway of DNA lesions induced by oxidative and alkylating agents. Initiates repair of AP sites in DNA by catalyzing hydrolytic incision of the phosphodiester backbone immediately adjacent to the damage, generating a single-strand break with 5'-deoxyribose phosphate and 3'-hydroxyl ends. Also incises at AP sites in the DNA strand of DNA/RNA hybrids, single-stranded DNA regions of R-loop structures, and single-stranded RNA molecules. Has 3'-5' exoribonuclease activity on mismatched deoxyribonucleotides at the 3' termini of nicked or gapped DNA molecules during short-patch BER. Possesses DNA 3' phosphodiesterase activity capable of removing lesions (such as phosphoglycolate) blocking the 3' side of DNA strand breaks. May also play a role in the epigenetic regulation of gene expression by participating in DNA demethylation. Acts as a loading factor for POLB onto non-incised AP sites in DNA and stimulates the 5'-terminal deoxyribose 5'-phosphate (dRp) excision activity of POLB. Plays a role in the protection from granzyme-mediated cellular repair leading to cell death. Also involved in the DNA cleavage step of class switch recombination (CSR). On the other hand, APEX1 also exerts reversible nuclear redox activity to regulate DNA binding affinity and transcriptional activity of transcriptional factors by controlling the redox status of their DNA-binding domain, such as the FOS/JUN AP-1 complex after exposure to IR. Involved in calcium-dependent down-regulation of parathyroid hormone (PTH) expression by binding to negative calcium response elements (nCaREs). Together with HNRNPL or the dimer XRCC5/XRCC6, associates with nCaRE, acting as an activator of transcriptional repression. Stimulates the YBX1-mediated MDR1 promoter activity, when acetylated at Lys-6 and Lys-7, leading to drug resistance. Also acts as an endoribonuclease involved in the control of single-stranded RNA metabolism. Plays a role in regulating MYC mRNA turnover by preferentially cleaving in between UA and CA dinucleotides of the MYC coding region determinant (CRD). In association with NMD1, plays a role in the rRNA quality control process during cell cycle progression. Associates, together with YBX1, on the MDR1 promoter. Together with NPM1, associates with rRNA. Binds DNA and RNA. This chain is DNA repair nuclease/redox regulator APEX1 (APEX1), found in Gorilla gorilla gorilla (Western lowland gorilla).